The sequence spans 156 residues: Transcription elongation factor GreA (156 aa).

Residues Glu44 to Gln67 adopt a coiled-coil conformation.

This sequence belongs to the GreA/GreB family.

Functionally, necessary for efficient RNA polymerase transcription elongation past template-encoded arresting sites. The arresting sites in DNA have the property of trapping a certain fraction of elongating RNA polymerases that pass through, resulting in locked ternary complexes. Cleavage of the nascent transcript by cleavage factors such as GreA or GreB allows the resumption of elongation from the new 3'terminus. GreA releases sequences of 2 to 3 nucleotides. The sequence is that of Transcription elongation factor GreA from Syntrophobacter fumaroxidans (strain DSM 10017 / MPOB).